Reading from the N-terminus, the 210-residue chain is Large ribosomal subunit protein uL3 (210 aa).

The protein belongs to the universal ribosomal protein uL3 family. In terms of assembly, part of the 50S ribosomal subunit. Forms a cluster with proteins L14 and L19.

One of the primary rRNA binding proteins, it binds directly near the 3'-end of the 23S rRNA, where it nucleates assembly of the 50S subunit. This chain is Large ribosomal subunit protein uL3, found in Lawsonia intracellularis (strain PHE/MN1-00).